A 320-amino-acid chain; its full sequence is Acetyl-coenzyme A carboxylase carboxyl transferase subunit alpha (320 aa).

In terms of domain architecture, CoA carboxyltransferase C-terminal spans Ile-42–Asp-295.

Belongs to the AccA family. As to quaternary structure, acetyl-CoA carboxylase is a heterohexamer composed of biotin carboxyl carrier protein (AccB), biotin carboxylase (AccC) and two subunits each of ACCase subunit alpha (AccA) and ACCase subunit beta (AccD).

It is found in the cytoplasm. It carries out the reaction N(6)-carboxybiotinyl-L-lysyl-[protein] + acetyl-CoA = N(6)-biotinyl-L-lysyl-[protein] + malonyl-CoA. It functions in the pathway lipid metabolism; malonyl-CoA biosynthesis; malonyl-CoA from acetyl-CoA: step 1/1. Component of the acetyl coenzyme A carboxylase (ACC) complex. First, biotin carboxylase catalyzes the carboxylation of biotin on its carrier protein (BCCP) and then the CO(2) group is transferred by the carboxyltransferase to acetyl-CoA to form malonyl-CoA. The protein is Acetyl-coenzyme A carboxylase carboxyl transferase subunit alpha of Afipia carboxidovorans (strain ATCC 49405 / DSM 1227 / KCTC 32145 / OM5) (Oligotropha carboxidovorans).